The following is a 602-amino-acid chain: Elongation factor 4 (602 aa).

The region spanning 7-188 (ENIRNFSIIA…SIIRLVPPPK (182 aa)) is the tr-type G domain. Residues 19 to 24 (DHGKST) and 135 to 138 (NKID) each bind GTP.

This sequence belongs to the TRAFAC class translation factor GTPase superfamily. Classic translation factor GTPase family. LepA subfamily.

It is found in the cell inner membrane. The enzyme catalyses GTP + H2O = GDP + phosphate + H(+). In terms of biological role, required for accurate and efficient protein synthesis under certain stress conditions. May act as a fidelity factor of the translation reaction, by catalyzing a one-codon backward translocation of tRNAs on improperly translocated ribosomes. Back-translocation proceeds from a post-translocation (POST) complex to a pre-translocation (PRE) complex, thus giving elongation factor G a second chance to translocate the tRNAs correctly. Binds to ribosomes in a GTP-dependent manner. This chain is Elongation factor 4, found in Chlamydia trachomatis serovar A (strain ATCC VR-571B / DSM 19440 / HAR-13).